The primary structure comprises 272 residues: NADPH-dependent aldehyde reductase 2, chloroplastic (272 aa).

Residues 1 to 53 constitute a chloroplast transit peptide; that stretch reads MAAASSVSSPPLCLAGRVAIVTGSSRGIGRAIAIHLAELGARVVVNYSTSPVE. 26 to 50 is a binding site for NADP(+); it reads RGIGRAIAIHLAELGARVVVNYSTS. A substrate-binding site is contributed by Ser165. Tyr179 (proton acceptor) is an active-site residue.

This sequence belongs to the short-chain dehydrogenases/reductases (SDR) family.

It is found in the plastid. Its subcellular location is the chloroplast. Functionally, aldehyde reductase that catalyzes the reduction of the aldehyde carbonyl groups on saturated and alpha,beta-unsaturated aldehydes with more than 5 carbons. No activity on alpha,beta-unsaturated ketones. Can use propionaldehyde, butyraldehyde, methylglyoxal, (e)-2-pentenal, (E)-2-hexenal, (Z)-3-hexenal and (E)-2-nonenal as substrates, but not propenal (acrolein), crotonaldehyde, 2-butanone, 3-buten-2-one or 1-penten-3-one. The chain is NADPH-dependent aldehyde reductase 2, chloroplastic from Arabidopsis thaliana (Mouse-ear cress).